Here is a 424-residue protein sequence, read N- to C-terminus: Histidine--tRNA ligase (424 aa).

It belongs to the class-II aminoacyl-tRNA synthetase family. As to quaternary structure, homodimer.

It is found in the cytoplasm. It carries out the reaction tRNA(His) + L-histidine + ATP = L-histidyl-tRNA(His) + AMP + diphosphate + H(+). This is Histidine--tRNA ligase from Shewanella pealeana (strain ATCC 700345 / ANG-SQ1).